A 363-amino-acid chain; its full sequence is Zinc finger protein 830 (363 aa).

The residue at position 2 (Ala-2) is an N-acetylalanine. Residues 16-40 (VNQEELRRLMREKQRLSTNRKRIES) adopt a coiled-coil conformation. The C2H2-type zinc finger occupies 53 to 75 (CALCNTPVKSELLWQTHVLGKQH). Residues 81–213 (ELKGAKGATQ…NPPKAPLVPH (133 aa)) are disordered. A compositionally biased stretch (polar residues) spans 90-99 (QGPSTGTVPQ). The segment covering 104–115 (RATDVESQDAKK) has biased composition (basic and acidic residues). A compositionally biased stretch (low complexity) spans 129–143 (SASSANLDAARAAPS). Over residues 152-164 (DYDDEEEEEEEGG) the composition is skewed to acidic residues. The span at 165-184 (GEERRDSSKHLPDAQGKEHS) shows a compositional bias: basic and acidic residues. Residues 189 to 205 (RETTSNVLPNDPFNTNP) show a composition bias toward polar residues. Ser-216 bears the Phosphoserine mark. The stretch at 303–331 (IECYRRVEKLRNRQDEIKNKLKEVLTIKE) forms a coiled coil. A phosphoserine mark is found at Ser-342 and Ser-353.

In terms of assembly, component of the XAB2 complex, a multimeric protein complex composed of XAB2, PRPF19, AQR, ZNF830, ISY1, and PPIE; this complex binds preferentially to RNA. Interacts with XAB2. Identified in a pentameric intron-binding (IB) complex composed of AQR, XAB2, ISY1, ZNF830 and PPIE that is incorporated into the spliceosome as a preassembled complex. The IB complex does not contain PRPF19. Phosphorylated in response to DNA damage by the cell cycle checkpoint kinases ATR/ATM. As to expression, widely expressed at low level. Expressed in oocytes from primordial to antral follicles. Also detected in somatic cells of the ovary, namely, in granulosa cells from the pre-antral follicle stage onward.

It localises to the nucleus. Its subcellular location is the chromosome. The protein localises to the nucleus speckle. Functionally, may play a role in pre-mRNA splicing as component of the spliceosome. Acts as an important regulator of the cell cycle that participates in the maintenance of genome integrity. During cell cycle progression in embryonic fibroblast, prevents replication fork collapse, double-strand break formation and cell cycle checkpoint activation. Controls mitotic cell cycle progression and cell survival in rapidly proliferating intestinal epithelium and embryonic stem cells. During the embryo preimplantation, controls different aspects of M phase. During early oocyte growth, plays a role in oocyte survival by preventing chromosomal breaks formation, activation of TP63 and reduction of transcription. The polypeptide is Zinc finger protein 830 (Mus musculus (Mouse)).